The sequence spans 102 residues: RNA-binding protein Hfq (102 aa).

The region spanning 9 to 68 (DPFLNALRRERVPVSIYLVNGIKLQGQIESFDQFVILLKNTVSQMVYKHAISTVVPSRPV) is the Sm domain. The tract at residues 63–102 (VPSRPVSHHSNNAGGGSSNYHHGGSAQGSSAPQQDSDDAE) is disordered. Residues 70–86 (HHSNNAGGGSSNYHHGG) show a composition bias toward low complexity.

Belongs to the Hfq family. Homohexamer.

RNA chaperone that binds small regulatory RNA (sRNAs) and mRNAs to facilitate mRNA translational regulation in response to envelope stress, environmental stress and changes in metabolite concentrations. Also binds with high specificity to tRNAs. The chain is RNA-binding protein Hfq from Klebsiella pneumoniae (strain 342).